The following is a 297-amino-acid chain: Diaminopimelate epimerase (297 aa).

Positions 13, 46, and 66 each coordinate substrate. Catalysis depends on cysteine 76, which acts as the Proton donor. Residues 77–78 (GN), asparagine 174, asparagine 207, and 225–226 (ER) contribute to the substrate site. The active-site Proton acceptor is the cysteine 234. 235–236 (GT) is a binding site for substrate.

It belongs to the diaminopimelate epimerase family. Homodimer.

The protein localises to the cytoplasm. It catalyses the reaction (2S,6S)-2,6-diaminopimelate = meso-2,6-diaminopimelate. It functions in the pathway amino-acid biosynthesis; L-lysine biosynthesis via DAP pathway; DL-2,6-diaminopimelate from LL-2,6-diaminopimelate: step 1/1. Functionally, catalyzes the stereoinversion of LL-2,6-diaminopimelate (L,L-DAP) to meso-diaminopimelate (meso-DAP), a precursor of L-lysine and an essential component of the bacterial peptidoglycan. The protein is Diaminopimelate epimerase of Leptothrix cholodnii (strain ATCC 51168 / LMG 8142 / SP-6) (Leptothrix discophora (strain SP-6)).